We begin with the raw amino-acid sequence, 1375 residues long: BNI1-related protein 1 (1375 aa).

The 397-residue stretch at 94–490 folds into the GBD/FH3 domain; it reads CMPQDASLVE…YLIDSFQVST (397 aa). The stretch at 520 to 601 forms a coiled coil; that stretch reads QSDEIARRAV…ITTHQRLYDQ (82 aa). Phosphoserine is present on serine 621. Residues 659–851 enclose the FH1 domain; sequence SSYLTDANNE…LVTPPAPPLP (193 aa). The tract at residues 661–684 is disordered; that stretch reads YLTDANNENESQNESEDKSKDSLF. The residue at position 751 (serine 751) is a Phosphoserine. Disordered stretches follow at residues 764–785, 817–839, and 1285–1309; these read KLPQLPPPPPPPPPPPLPQSLL, AVPPPPPPPPLPESLSMNKGPSN, and KSLLDMRTSSNKKSNGSDENDGEKV. 2 stretches are compositionally biased toward pro residues: residues 767 to 781 and 818 to 828; these read QLPPPPPPPPPPPLP and VPPPPPPPPLP. Residues 868-1290 enclose the FH2 domain; that stretch reads DLKPPPTEKR…YEQRKSLLDM (423 aa). Positions 1302 to 1336 constitute a DAD domain; it reads DENDGEKVNRDAVDLLISKLREVKKDPEPLRRRKS.

Belongs to the formin homology family. BNI1 subfamily. In terms of assembly, interacts with profilin at the FH1 domain.

In terms of biological role, may organize microtubules by mediating spindle positioning and movement in the budding process. Potential target of the RHO family members. The polypeptide is BNI1-related protein 1 (BNR1) (Saccharomyces cerevisiae (strain ATCC 204508 / S288c) (Baker's yeast)).